A 512-amino-acid chain; its full sequence is ATP synthase subunit alpha (512 aa).

An ATP-binding site is contributed by 169-176; the sequence is GDRQTGKT.

This sequence belongs to the ATPase alpha/beta chains family. In terms of assembly, F-type ATPases have 2 components, CF(1) - the catalytic core - and CF(0) - the membrane proton channel. CF(1) has five subunits: alpha(3), beta(3), gamma(1), delta(1), epsilon(1). CF(0) has three main subunits: a(1), b(2) and c(9-12). The alpha and beta chains form an alternating ring which encloses part of the gamma chain. CF(1) is attached to CF(0) by a central stalk formed by the gamma and epsilon chains, while a peripheral stalk is formed by the delta and b chains.

The protein localises to the cell inner membrane. The catalysed reaction is ATP + H2O + 4 H(+)(in) = ADP + phosphate + 5 H(+)(out). Produces ATP from ADP in the presence of a proton gradient across the membrane. The alpha chain is a regulatory subunit. This Ruegeria pomeroyi (strain ATCC 700808 / DSM 15171 / DSS-3) (Silicibacter pomeroyi) protein is ATP synthase subunit alpha.